We begin with the raw amino-acid sequence, 2237 residues long: Activating signal cointegrator 1 complex subunit 3-like (2237 aa).

Disordered stretches follow at residues 1–48 (MSEE…RGEM), 71–118 (TIEK…KPID), 242–330 (DEEE…SKLI), and 445–472 (EKTIEKTESNKKDVEMKQQQQQQQDEIK). A compositionally biased stretch (basic and acidic residues) spans 24 to 37 (ERNRSELKEPKGEP). Polar residues predominate over residues 79-97 (VNSSNDTYSTTKKVKNQNP). Residues 105–114 (RKSNGNNNNE) are compositionally biased toward low complexity. The span at 242–282 (DEEEEEENLSDFEIRDDDDDDDDVDNNEVDDNNNNDSEAQD) shows a compositional bias: acidic residues. 2 stretches are compositionally biased toward basic and acidic residues: residues 312-325 (QKPDTKNTKDDKNN) and 446-460 (KTIEKTESNKKDVEM). Residues 440 to 468 (TAATTEKTIEKTESNKKDVEMKQQQQQQQ) are a coiled coil. A Helicase ATP-binding 1 domain is found at 561–745 (DCAFKTDNNL…FLRVEPDGVF (185 aa)). 574 to 581 (APTSSGKT) is a binding site for ATP. The DEAH box signature appears at 687–690 (DEIH). The region spanning 755 to 990 (PLEQQYIGIS…TVRDAVNWLG (236 aa)) is the Helicase C-terminal 1 domain. One can recognise an SEC63 1 domain in the interval 1050 to 1356 (STELGKVASH…GAEYSLPISF (307 aa)). The region spanning 1407-1584 (NCMYQSNDNA…WIGATPQTCY (178 aa)) is the Helicase ATP-binding 2 domain. ATP is bound at residue 1420 to 1427 (APTNSGKT). The short motif at 1526–1529 (DELH) is the DEAH box element. The Helicase C-terminal 2 domain maps to 1657 to 1832 (TLTKPYLVCE…TITKKQDALD (176 aa)). Residues 1892–2215 (PLNLGIIASY…GCDQEHELNI (324 aa)) form the SEC63 2 domain.

This sequence belongs to the helicase family.

The polypeptide is Activating signal cointegrator 1 complex subunit 3-like (ascc3l) (Dictyostelium discoideum (Social amoeba)).